A 261-amino-acid chain; its full sequence is Phosphatidylglycerol--prolipoprotein diacylglyceryl transferase (261 aa).

7 helical membrane-spanning segments follow: residues 19–39, 56–76, 92–112, 126–146, 173–193, 199–219, and 227–247; these read VHWY…LALY, LIFY…MLFY, WRGG…TWIF, FVVP…FING, QLYE…WFSA, FAVS…AEFF, and GFVA…MIII. A 1,2-diacyl-sn-glycero-3-phospho-(1'-sn-glycerol) is bound at residue R139.

It belongs to the Lgt family.

The protein localises to the cell inner membrane. The catalysed reaction is L-cysteinyl-[prolipoprotein] + a 1,2-diacyl-sn-glycero-3-phospho-(1'-sn-glycerol) = an S-1,2-diacyl-sn-glyceryl-L-cysteinyl-[prolipoprotein] + sn-glycerol 1-phosphate + H(+). Its pathway is protein modification; lipoprotein biosynthesis (diacylglyceryl transfer). Catalyzes the transfer of the diacylglyceryl group from phosphatidylglycerol to the sulfhydryl group of the N-terminal cysteine of a prolipoprotein, the first step in the formation of mature lipoproteins. The polypeptide is Phosphatidylglycerol--prolipoprotein diacylglyceryl transferase (Coxiella burnetii (strain Dugway 5J108-111)).